A 289-amino-acid polypeptide reads, in one-letter code: Proteasome assembly chaperone 1 (289 aa).

Positions 1–38 are disordered; sequence MAATFFGEVVKAPCRAGTEEEEEEEEQSRRDTPEDREV. An N-acetylalanine modification is found at A2. Residue T18 is modified to Phosphothreonine. A compositionally biased stretch (basic and acidic residues) spans 27 to 38; the sequence is QSRRDTPEDREV. Position 55 is a phosphothreonine (T55). Residue S181 is modified to Phosphoserine. K265 is subject to N6-acetyllysine.

This sequence belongs to the PSMG1 family. As to quaternary structure, forms a heterodimer with PSMG2. The PSMG1-PSMG2 heterodimer interacts directly with the PSMA5 and PSMA7 proteasome alpha subunits. Degraded by the proteasome upon completion of 20S proteasome maturation. Highly expressed in testis with moderate expression in brain, liver and kidney and low levels in heart, skeletal muscle and pancreas.

It is found in the cytoplasm. The protein localises to the endoplasmic reticulum. Functionally, chaperone protein which promotes assembly of the 20S proteasome as part of a heterodimer with PSMG2. The PSMG1-PSMG2 heterodimer binds to the PSMA5 and PSMA7 proteasome subunits, promotes assembly of the proteasome alpha subunits into the heteroheptameric alpha ring and prevents alpha ring dimerization. This Mus musculus (Mouse) protein is Proteasome assembly chaperone 1.